The following is a 614-amino-acid chain: Protein YehQ (614 aa).

SWIM-type zinc fingers lie at residues 55 to 89 and 151 to 185; these read VRTQ…LSYQ and SDVR…QAFV.

The polypeptide is Protein YehQ (yehQ) (Escherichia coli (strain K12)).